A 338-amino-acid chain; its full sequence is Thiamine thiazole synthase (338 aa).

The interval 1–43 (MSPVATESMYKPTTINQTAHQQAMDPLKSKQQSNATVNKPAFK) is disordered. Over residues 11-21 (KPTTINQTAHQ) the composition is skewed to polar residues. Substrate-binding positions include A91, 112-113 (ES), G120, and C185. At C221 the chain carries 2,3-didehydroalanine (Cys). Substrate contacts are provided by residues D223, H238, M290, and 300 to 302 (RMG).

Belongs to the THI4 family. Homooctamer. Fe cation is required as a cofactor. Post-translationally, during the catalytic reaction, a sulfide is transferred from Cys-221 to a reaction intermediate, generating a dehydroalanine residue. Highly expressed in haustoria, and only in low amounts in intercellular hyphae. Found in the basal hyphae of the uredia, but not in the pedicels and only at very low levels in uredospores.

It is found in the cytoplasm. It localises to the nucleus. It carries out the reaction [ADP-thiazole synthase]-L-cysteine + glycine + NAD(+) = [ADP-thiazole synthase]-dehydroalanine + ADP-5-ethyl-4-methylthiazole-2-carboxylate + nicotinamide + 3 H2O + 2 H(+). Functionally, involved in biosynthesis of the thiamine precursor thiazole. Catalyzes the conversion of NAD and glycine to adenosine diphosphate 5-(2-hydroxyethyl)-4-methylthiazole-2-carboxylic acid (ADT), an adenylated thiazole intermediate. The reaction includes an iron-dependent sulfide transfer from a conserved cysteine residue of the protein to a thiazole intermediate. The enzyme can only undergo a single turnover, which suggests it is a suicide enzyme. May have additional roles in adaptation to various stress conditions and in DNA damage tolerance. In Uromyces fabae (Rust fungus), this protein is Thiamine thiazole synthase (THI2).